Consider the following 545-residue polypeptide: Degenerin-like protein asic-2 (545 aa).

Over 1–34 (MRGGGFVQIFKDFSNWSTVAVVPHVANANNKISR) the chain is Cytoplasmic. A helical membrane pass occupies residues 35–55 (IFWIAIFLFVLGMFAYELYIL). At 56–457 (IAKFFSYPAT…NVINDLGGQA (402 aa)) the chain is on the extracellular side. C83 and C191 are oxidised to a cystine. An N-linked (GlcNAc...) asparagine glycan is attached at N201. 5 disulfide bridges follow: C284–C370, C305–C366, C309–C364, C318–C343, and C320–C334. N350 carries an N-linked (GlcNAc...) asparagine glycan. A helical membrane pass occupies residues 458–478 (GLWLGLSVISVVEMTGLMLVM). The GAS motif; ion selectivity filter signature appears at 462-464 (GLS). The Cytoplasmic segment spans residues 479-545 (GAFCVTGGAI…NKGDEEKKKK (67 aa)). Composition is skewed to basic and acidic residues over residues 514 to 523 (DHLEKKHGEM) and 534 to 545 (IENKGDEEKKKK). The interval 514–545 (DHLEKKHGEMESGSDGEVDDIENKGDEEKKKK) is disordered.

This sequence belongs to the amiloride-sensitive sodium channel (TC 1.A.6) family. As to quaternary structure, can form homotrimers. Heterotrimer; forms functional heterotrimers producing channel with different properties.

The protein resides in the cell membrane. It catalyses the reaction Na(+)(in) = Na(+)(out). Inhibited by the diuretic drug amiloride. Could form pH-gated heterotrimeric sodium channels that act as postsynaptic excitatory sensors in the nervous system, generating rapid, transient inward currents that fully desensitize upon extracellular acidification. The polypeptide is Degenerin-like protein asic-2 (asic-2) (Caenorhabditis elegans).